Reading from the N-terminus, the 85-residue chain is U4-theraphotoxin-Hhn1g (85 aa).

The signal sequence occupies residues 1 to 22 (MKVTLIAILTCAAVLVLHTTAA). Positions 23 to 48 (EELEAESQLMEVGMPDTELAAVDEER) are excised as a propeptide. Disulfide bonds link C52/C66, C56/C77, and C71/C82.

Belongs to the neurotoxin 12 (Hwtx-2) family. 02 (Hwtx-2) subfamily. Expressed by the venom gland.

It localises to the secreted. Its function is as follows. Postsynaptic neurotoxin. This chain is U4-theraphotoxin-Hhn1g, found in Cyriopagopus hainanus (Chinese bird spider).